A 1793-amino-acid chain; its full sequence is Brefeldin A-inhibited guanine nucleotide-exchange protein 2 (1793 aa).

The residue at position 2 (Ala2) is an N-acetylalanine. 3 disordered regions span residues 45 to 71, 266 to 299, and 579 to 606; these read NSLQ…PGPL, TMSG…LLDS, and GSPQ…GGTS. Residues 55 to 66 show a composition bias toward low complexity; it reads SSAATDSESESS. Over residues 270 to 281 the composition is skewed to gly residues; that stretch reads SGSGSGSGGQDG. Composition is skewed to polar residues over residues 284–294 and 594–605; these read GTTTVETTNPT and GSDTYSESSGGT. Residue Ser595 is modified to Phosphoserine. The region spanning 610–797 is the SEC7 domain; the sequence is AIEQRRAYKL…RSLYERITKH (188 aa). Glu712 is a catalytic residue. A compositionally biased stretch (polar residues) spans 1311–1327; the sequence is NKYKGTSGKIPQSSLHS. The disordered stretch occupies residues 1311–1333; sequence NKYKGTSGKIPQSSLHSGKSGKQ.

As to quaternary structure, homodimer.

The protein localises to the cytoplasm. Its subcellular location is the cytosol. It is found in the membrane. Its activity is regulated as follows. Inhibited by brefeldin A. Functionally, activates the ARF proteins by exchanging bound GDP for free GTP. Plays a role in vesicular protein sorting. In Arabidopsis thaliana (Mouse-ear cress), this protein is Brefeldin A-inhibited guanine nucleotide-exchange protein 2 (BIG2).